The following is a 245-amino-acid chain: Lactate utilization protein A 1 (245 aa).

Belongs to the LutA/YkgE family.

In terms of biological role, is involved in L-lactate degradation and allows cells to grow with lactate as the sole carbon source. The chain is Lactate utilization protein A 1 from Bacillus mycoides (strain KBAB4) (Bacillus weihenstephanensis).